A 677-amino-acid polypeptide reads, in one-letter code: Methionine--tRNA ligase (677 aa).

The 'HIGH' region motif lies at 15–25 (PYANGSIHLGH). Zn(2+) is bound by residues cysteine 146, cysteine 149, cysteine 159, and cysteine 162. The short motif at 333–337 (KMSKS) is the 'KMSKS' region element. Lysine 336 is a binding site for ATP. Residues 575–677 (DFAKVDLRVA…AGAKPGHQVK (103 aa)) enclose the tRNA-binding domain.

Belongs to the class-I aminoacyl-tRNA synthetase family. MetG type 1 subfamily. In terms of assembly, homodimer. Zn(2+) is required as a cofactor.

The protein localises to the cytoplasm. It carries out the reaction tRNA(Met) + L-methionine + ATP = L-methionyl-tRNA(Met) + AMP + diphosphate. Functionally, is required not only for elongation of protein synthesis but also for the initiation of all mRNA translation through initiator tRNA(fMet) aminoacylation. This chain is Methionine--tRNA ligase, found in Shigella dysenteriae serotype 1 (strain Sd197).